The chain runs to 103 residues: Small ribosomal subunit protein uS10 (103 aa).

Belongs to the universal ribosomal protein uS10 family. As to quaternary structure, part of the 30S ribosomal subunit.

Functionally, involved in the binding of tRNA to the ribosomes. This is Small ribosomal subunit protein uS10 from Leptothrix cholodnii (strain ATCC 51168 / LMG 8142 / SP-6) (Leptothrix discophora (strain SP-6)).